Reading from the N-terminus, the 598-residue chain is Arginine--tRNA ligase (598 aa).

Positions 131–141 (ANPTGPMHVGH) match the 'HIGH' region motif. The tract at residues 288-309 (KLPPPKSKKGQPPPQAQPDEEG) is disordered.

It belongs to the class-I aminoacyl-tRNA synthetase family. In terms of assembly, monomer.

Its subcellular location is the cytoplasm. The enzyme catalyses tRNA(Arg) + L-arginine + ATP = L-arginyl-tRNA(Arg) + AMP + diphosphate. The polypeptide is Arginine--tRNA ligase (Anaeromyxobacter dehalogenans (strain 2CP-C)).